Reading from the N-terminus, the 787-residue chain is Signal transducer and activator of transcription 5B (787 aa).

At Tyr-90 the chain carries Phosphotyrosine. Phosphoserine occurs at positions 128 and 193. Residues 232–321 (KHQKTLQLLR…MLAEVNATIT (90 aa)) are required for interaction with NMI. Residues 589–686 (WNDGAILGFV…EVYSKYYTPV (98 aa)) enclose the SH2 domain. Tyr-682 is subject to Phosphotyrosine. Tyr-699 carries the phosphotyrosine; by HCK, JAK and PTK6 modification.

This sequence belongs to the transcription factor STAT family. As to quaternary structure, upon activation, forms homodimers. Forms also heterodimers with related family members. Binds NR3C1. Interacts with NCOA1. Interacts with NMI. Interacts with SOCS7. Interacts (via SH2 domain) with INSR. Interacts with CPEB3; this inhibits STAT5B-mediated transcriptional activation. Tyrosine phosphorylated in response to signaling via activated KIT, resulting in translocation to the nucleus. Tyrosine phosphorylated in response to signaling via activated FLT3; wild-type FLT3 results in much weaker phosphorylation than constitutively activated mutant FLT3. Alternatively, can be phosphorylated by JAK2. Phosphorylation at Tyr-699 by PTK6 or HCK leads to an increase of its transcriptional activity.

It localises to the cytoplasm. It is found in the nucleus. In terms of biological role, carries out a dual function: signal transduction and activation of transcription. Mediates cellular responses to the cytokine KITLG/SCF and other growth factors. Binds to the GAS element and activates PRL-induced transcription. Positively regulates hematopoietic/erythroid differentiation. The protein is Signal transducer and activator of transcription 5B (STAT5B) of Homo sapiens (Human).